The chain runs to 54 residues: Large ribosomal subunit protein bL33A (54 aa).

Belongs to the bacterial ribosomal protein bL33 family.

The protein is Large ribosomal subunit protein bL33A of Saccharopolyspora erythraea (strain ATCC 11635 / DSM 40517 / JCM 4748 / NBRC 13426 / NCIMB 8594 / NRRL 2338).